The primary structure comprises 155 residues: Mitochondrial import protein 1 (155 aa).

It belongs to the MIM1 family.

The protein localises to the mitochondrion outer membrane. Its function is as follows. Required for the assembly of the TOM (translocase of outer membrane) receptor complex, which is responsible for the recognition and translocation of cytosolically synthesized mitochondrial preproteins. The protein is Mitochondrial import protein 1 of Eremothecium gossypii (strain ATCC 10895 / CBS 109.51 / FGSC 9923 / NRRL Y-1056) (Yeast).